A 405-amino-acid polypeptide reads, in one-letter code: Cystathionine gamma-lyase (405 aa).

Substrate-binding residues include Arg-62, Tyr-114, and Arg-119. Position 212 is an N6-(pyridoxal phosphate)lysine (Lys-212). A substrate-binding site is contributed by Glu-339.

This sequence belongs to the trans-sulfuration enzymes family. As to quaternary structure, homotetramer. Interacts with CALM in a calcium-dependent manner. The cofactor is pyridoxal 5'-phosphate. Highly expressed in liver. Also in muscle and lower expression in most tissues except heart, pituitary gland, spleen, thymus, and vascular tissue, where it is hardly detected.

It is found in the cytoplasm. It carries out the reaction L,L-cystathionine + H2O = 2-oxobutanoate + L-cysteine + NH4(+). The enzyme catalyses L-cysteine + H2O = hydrogen sulfide + pyruvate + NH4(+) + H(+). It catalyses the reaction L-homocysteine + H2O = 2-oxobutanoate + hydrogen sulfide + NH4(+) + H(+). The catalysed reaction is L-homoserine = 2-oxobutanoate + NH4(+). It carries out the reaction L-selenocystathionine + H2O = L-selenocysteine + 2-oxobutanoate + NH4(+). It functions in the pathway amino-acid biosynthesis; L-cysteine biosynthesis; L-cysteine from L-homocysteine and L-serine: step 2/2. Its activity is regulated as follows. Inhibited by propargylglycine, trifluoroalanine and aminoethoxyvinylglycine. In terms of biological role, catalyzes the last step in the trans-sulfuration pathway from L-methionine to L-cysteine in a pyridoxal-5'-phosphate (PLP)-dependent manner, which consists on cleaving the L,L-cystathionine molecule into L-cysteine, ammonia and 2-oxobutanoate. Part of the L-cysteine derived from the trans-sulfuration pathway is utilized for biosynthesis of the ubiquitous antioxidant glutathione. Besides its role in the conversion of L-cystathionine into L-cysteine, it utilizes L-cysteine and L-homocysteine as substrates (at much lower rates than L,L-cystathionine) to produce the endogenous gaseous signaling molecule hydrogen sulfide (H2S). In vitro, it converts two L-cysteine molecules into lanthionine and H2S, also two L-homocysteine molecules to homolanthionine and H2S, which can be particularly relevant under conditions of severe hyperhomocysteinemia (which is a risk factor for cardiovascular disease, diabetes, and Alzheimer's disease). Lanthionine and homolanthionine are structural homologs of L,L-cystathionine that differ by the absence or presence of an extra methylene group, respectively. Acts as a cysteine-protein sulfhydrase by mediating sulfhydration of target proteins: sulfhydration consists of converting -SH groups into -SSH on specific cysteine residues of target proteins such as GAPDH, PTPN1 and NF-kappa-B subunit RELA, thereby regulating their function. By generating the gasotransmitter H2S, it participates in a number of physiological processes such as vasodilation, bone protection, and inflammation. Plays an essential role in myogenesis by contributing to the biogenesis of H2S in skeletal muscle tissue. Can also accept homoserine as substrate. Catalyzes the elimination of selenocystathionine (which can be derived from the diet) to yield selenocysteine, ammonia and 2-oxobutanoate. The polypeptide is Cystathionine gamma-lyase (CTH) (Homo sapiens (Human)).